The primary structure comprises 258 residues: Chemokine-binding protein (258 aa).

A signal peptide spans Met1–Met17. The disordered stretch occupies residues Thr65–Pro93. Residues Thr68–Asp91 show a composition bias toward acidic residues.

Belongs to the orthopoxvirus OPG001 family. As to quaternary structure, binds to host CC chemokines, such as RANTES/CCL5, MIP-1alpha/CCL3, MCP-1/CCL2 and eotaxin.

The protein resides in the secreted. Inhibits host immune defense by binding to host chemokines. Binds host CC chemokines (beta chemokines) such as RANTES with high affinity, but not CXC or C chemokines (alpha and gamma chemokines). This is Chemokine-binding protein (OPG001) from Homo sapiens (Human).